A 161-amino-acid polypeptide reads, in one-letter code: NADH:FMN oxidoreductase (161 aa).

FMN is bound by residues D30, 37 to 40 (AAST), 54 to 61 (CVQNSSTT), A88, R94, and F151.

This sequence belongs to the non-flavoprotein flavin reductase family.

The protein resides in the cytoplasm. The enzyme catalyses FMNH2 + NAD(+) = FMN + NADH + 2 H(+). The catalysed reaction is FADH2 + NAD(+) = FAD + NADH + 2 H(+). It functions in the pathway sulfur metabolism; dibenzothiophene degradation. An NADH:FMN oxidoreductase which supplies reduced FMN for the '4S' desulfurization pathway that removes covalently bound sulfur from dibenzothiophene (DBT) without breaking carbon-carbon bonds. Can also use FAD. Provides DszC and probably also DszA (DBT-monooxygenase and DBTO2-monooxygenase respectively) with reduced flavin (FMN and/or FAD). This chain is NADH:FMN oxidoreductase, found in Mycolicibacterium goodii (Mycobacterium goodii).